The following is a 253-amino-acid chain: 5-oxoprolinase subunit A (253 aa).

The protein belongs to the LamB/PxpA family. Forms a complex composed of PxpA, PxpB and PxpC.

It carries out the reaction 5-oxo-L-proline + ATP + 2 H2O = L-glutamate + ADP + phosphate + H(+). Functionally, catalyzes the cleavage of 5-oxoproline to form L-glutamate coupled to the hydrolysis of ATP to ADP and inorganic phosphate. The sequence is that of 5-oxoprolinase subunit A from Bacillus licheniformis (strain ATCC 14580 / DSM 13 / JCM 2505 / CCUG 7422 / NBRC 12200 / NCIMB 9375 / NCTC 10341 / NRRL NRS-1264 / Gibson 46).